Here is a 343-residue protein sequence, read N- to C-terminus: Putative KilA-N domain-containing protein R904 (343 aa).

One can recognise a KilA-N domain in the interval 51–157 (EFSWGNYLNL…IKASVIINDY (107 aa)). Residues 159-279 (AKQMFKEHEK…NAVKEYKELY (121 aa)) adopt a coiled-coil conformation.

In Acanthamoeba polyphaga mimivirus (APMV), this protein is Putative KilA-N domain-containing protein R904.